The chain runs to 548 residues: MRLRNGTFLTLLLFCLCAFLSLSWYAALSGQKGDVVDIYQREFLALRDRLHAAEQESLKRSKELNLVLEEIKRAVSERQALRDGEGNRTWGRLTEDPRLKPWNVSHRHVLHLPTVFHHLPHLLAKESSLQPAVRVGQGRTGVSVVMGIPSVRREVHSYLTDTLHSLISELSPQEKEDSVIVVLIAETDPQYTSAVTENIKALFPTEIHSGLLEVISPSPHFYPDFSRLRESFGDPKERVRWRTKQNLDYCFLMMYAQSKGIYYVQLEDDIVAKPNYLSTMKNFALQQPSEDWMILEFSQLGFIGKMFKSLDLSLIVEFILMFYRDKPIDWLLDHILWVKVCNPEKDAKHCDRQKANLRIRFKPSLFQHVGTHSSLAGKIQKLKDKDFGKHALRKEHVNPPAEVSTSLKTYQHFTLEKAYLREDFFWAFTPAAGDFIRFRFFQPLRLERFFFRSGNIEHPEDKLFNTSVEVLPFDNPQSEKEALQEGRSATLRYPRSPDGYLQIGSFYKGVAEGEVDPAFGPLEALRLSIQTDSPVWVILSEIFLKKAD.

Residues 1–7 (MRLRNGT) lie on the Cytoplasmic side of the membrane. Residues 8 to 28 (FLTLLLFCLCAFLSLSWYAAL) form a helical; Signal-anchor for type II membrane protein membrane-spanning segment. The Lumenal segment spans residues 29 to 548 (SGQKGDVVDI…LSEIFLKKAD (520 aa)). The stretch at 36-83 (VDIYQREFLALRDRLHAAEQESLKRSKELNLVLEEIKRAVSERQALRD) forms a coiled coil. N-linked (GlcNAc...) asparagine glycosylation is found at Asn-87 and Asn-103.

This sequence belongs to the glycosyltransferase 54 family. As to quaternary structure, interacts with SLC35A3. Requires a divalent metal cation as cofactor. Post-translationally, N-glycosylated.

The protein resides in the golgi apparatus membrane. It carries out the reaction N(4)-{beta-D-GlcNAc-(1-&gt;2)-alpha-D-Man-(1-&gt;3)-[beta-D-GlcNAc-(1-&gt;2)-alpha-D-Man-(1-&gt;6)]-beta-D-Man-(1-&gt;4)-beta-D-GlcNAc-(1-&gt;4)-beta-D-GlcNAc}-L-asparaginyl-[protein] + UDP-N-acetyl-alpha-D-glucosamine = N(4)-{beta-D-GlcNAc-(1-&gt;2)-[beta-D-GlcNAc-(1-&gt;4)]-alpha-D-Man-(1-&gt;3)-[beta-D-GlcNAc-(1-&gt;2)-alpha-D-Man-(1-&gt;6)]-beta-D-Man-(1-&gt;4)-beta-D-GlcNAc-(1-&gt;4)-beta-D-GlcNAc}-L-asparaginyl-[protein] + UDP + H(+). It catalyses the reaction an N(4)-{beta-D-GlcNAc-(1-&gt;2)-alpha-D-Man-(1-&gt;3)-[alpha-D-Man-(1-&gt;6)]-beta-D-Man-(1-&gt;4)-beta-D-GlcNAc-(1-&gt;4)-beta-D-GlcNAc}-L-asparaginyl-[protein] + UDP-N-acetyl-alpha-D-glucosamine = an N(4)-{beta-D-GlcNAc-(1-&gt;2)-[beta-D-GlcNAc-(1-&gt;4)]-alpha-D-Man-(1-&gt;3)-[alpha-D-Man-(1-&gt;6)]-beta-D-Man-(1-&gt;4)-beta-D-GlcNAc-(1-&gt;4)-beta-D-GlcNAc}-L-asparaginyl-[protein] + UDP + H(+). The enzyme catalyses an N(4)-{beta-D-GlcNAc-(1-&gt;2)-alpha-D-Man-(1-&gt;3)-[beta-D-GlcNAc-(1-&gt;2)-[beta-D-GlcNAc-(1-&gt;6)]-alpha-D-Man-(1-&gt;6)]-beta-D-Man-(1-&gt;4)-beta-D-GlcNAc-(1-&gt;4)-beta-D-GlcNAc}-L-asparaginyl-[protein] + UDP-N-acetyl-alpha-D-glucosamine = an N(4)-{beta-D-GlcNAc-(1-&gt;2)-[beta-D-GlcNAc-(1-&gt;4)]-alpha-D-Man-(1-&gt;3)-[beta-D-GlcNAc-(1-&gt;2)-[beta-D-GlcNAc-(1-&gt;6)]-alpha-D-Man-(1-&gt;6)]-beta-D-Man-(1-&gt;4)-beta-D-GlcNAc-(1-&gt;4)-beta-D-GlcNAc}-L-asparaginyl-[protein] + UDP + H(+). The catalysed reaction is an N(4)-{beta-D-GlcNAc-(1-&gt;2)-alpha-D-Man-(1-&gt;3)-[beta-D-GlcNAc-(1-&gt;2)-alpha-D-Man-(1-&gt;6)]-beta-D-Man-(1-&gt;4)-beta-D-GlcNAc-(1-&gt;4)-[alpha-L-Fuc-(1-&gt;6)]-beta-D-GlcNAc}-L-asparaginyl-[protein] + UDP-N-acetyl-alpha-D-glucosamine = N(4)-{beta-D-GlcNAc-(1-&gt;2)-[beta-D-GlcNAc-(1-&gt;4)]-alpha-D-Man-(1-&gt;3)-[beta-D-GlcNAc-(1-&gt;2)-alpha-D-Man-(1-&gt;6)]-beta-D-Man-(1-&gt;4)-beta-D-GlcNAc-(1-&gt;4)-[alpha-L-Fuc-(1-&gt;6)]-beta-D-GlcNAc}-asparaginyl-[protein] + UDP + H(+). It carries out the reaction an N(4)-{beta-D-GlcNAc-(1-&gt;2)-alpha-D-Man-(1-&gt;3)-[beta-D-Gal-(1-&gt;4)-beta-D-GlcNAc-(1-&gt;2)-alpha-D-Man-(1-&gt;6)]-beta-D-Man-(1-&gt;4)-beta-D-GlcNAc-(1-&gt;4)-beta-D-GlcNAc}-L-asparaginyl-[protein] + UDP-N-acetyl-alpha-D-glucosamine = an N(4)-{beta-D-GlcNAc-(1-&gt;2)-[beta-D-GlcNAc-(1-&gt;4)]-alpha-D-Man-(1-&gt;3)-[beta-D-Gal-(1-&gt;4)-beta-D-GlcNAc-(1-&gt;2)-alpha-D-Man-(1-&gt;6)]-beta-D-Man-(1-&gt;4)-beta-D-GlcNAc-(1-&gt;4)-beta-D-GlcNAc}-L-asparaginyl-[protein] + UDP + H(+). It catalyses the reaction N(4)-{beta-D-GlcNAc-(1-&gt;2)-alpha-D-Man-(1-&gt;3)-[alpha-D-Man-(1-&gt;3)-{alpha-D-Man-(1-&gt;6)}-alpha-D-Man-(1-&gt;6)]-beta-D-Man-(1-&gt;4)-beta-D-GlcNAc-(1-&gt;4)-beta-D-GlcNAc}-asparaginyl-[protein] + UDP-N-acetyl-alpha-D-glucosamine = N(4)-{beta-D-GlcNAc-(1-&gt;2)-[beta-D-GlcNAc-(1-&gt;4)]-alpha-D-Man-(1-&gt;3)-[alpha-D-Man-(1-&gt;3)-{alpha-D-Man-(1-&gt;6)}-alpha-D-Man-(1-&gt;6)]-beta-D-Man-(1-&gt;4)-beta-D-GlcNAc-(1-&gt;4)-beta-D-GlcNAc}-asparaginyl-[protein] + UDP + H(+). The enzyme catalyses N(4)-{beta-D-GlcNAc-(1-&gt;2)-alpha-D-Man-(1-&gt;3)-beta-D-Man-(1-&gt;4)-beta-D-GlcNAc-(1-&gt;4)-beta-D-GlcNAc}-asparaginyl-[protein] + UDP-N-acetyl-alpha-D-glucosamine = N(4)-{beta-D-GlcNAc-(1-&gt;2)-[beta-D-GlcNAc-(1-&gt;4)]-alpha-D-Man-(1-&gt;3)-beta-D-Man-(1-&gt;4)-beta-D-GlcNAc-(1-&gt;4)-beta-D-GlcNAc}-asparaginyl-[protein] + UDP + H(+). It functions in the pathway protein modification; protein glycosylation. Its function is as follows. Glycosyltransferase that catalyzes the transfer of GlcNAc from UDP-GlcNAc to the GlcNAcbeta1-2Manalpha1-3 arm of the core structure of N-linked glycans through a beta1-4 linkage and participates in the production of tri- and tetra-antennary N-linked sugar chains. Prefers complex-type N-glycans over hybrid-types. Has lower affinities for donors or acceptors than MGAT4A, suggesting that, under physiological conditions, it is not the main contributor in N-glycan biosynthesis. This Mus musculus (Mouse) protein is Alpha-1,3-mannosyl-glycoprotein 4-beta-N-acetylglucosaminyltransferase B.